The following is a 499-amino-acid chain: Glucose-6-phosphate exchanger SLC37A2 (499 aa).

The helical transmembrane segment at 21 to 40 (YRGFIIVMTFLFYTCYHMSR) threads the bilayer. Residues Asn53, Asn62, and Asn66 are each glycosylated (N-linked (GlcNAc...) asparagine). The next 11 membrane-spanning stretches (helical) occupy residues 86-106 (GSLD…SGIF), 116-136 (LSGG…GYYW), 138-158 (IHAL…QTTG), 187-207 (AVGN…AWGL), 208-228 (SFIV…FFLV), 302-322 (LCLL…PLYI), 334-354 (GDLS…AGGI), 362-382 (AITC…YNYL), 391-411 (VAML…ITTA), 434-454 (AIID…AGVL), and 458-478 (GWNY…LLLV).

The protein belongs to the major facilitator superfamily. Organophosphate:Pi antiporter (OPA) (TC 2.A.1.4) family.

It is found in the endoplasmic reticulum membrane. It catalyses the reaction D-glucose 6-phosphate(in) + phosphate(out) = D-glucose 6-phosphate(out) + phosphate(in). In terms of biological role, inorganic phosphate and glucose-6-phosphate antiporter. May transport cytoplasmic glucose-6-phosphate into the lumen of the endoplasmic reticulum and translocate inorganic phosphate into the opposite direction. This Xenopus tropicalis (Western clawed frog) protein is Glucose-6-phosphate exchanger SLC37A2.